Here is a 677-residue protein sequence, read N- to C-terminus: Transketolase 1 (677 aa).

His27 contacts substrate. Residues His66 and 114 to 116 (GPL) contribute to the thiamine diphosphate site. Asp155 provides a ligand contact to Mg(2+). Residues Gly156 and Asn185 each coordinate thiamine diphosphate. Mg(2+) is bound by residues Asn185 and Ile187. Residues His261, Arg356, and Ser383 each coordinate substrate. Residue His261 coordinates thiamine diphosphate. Thiamine diphosphate contacts are provided by Glu415 and Phe442. The active-site Proton donor is Glu415. 3 residues coordinate substrate: His466, Asp474, and Arg525.

It belongs to the transketolase family. Homodimer. Mg(2+) serves as cofactor. Requires Ca(2+) as cofactor. Mn(2+) is required as a cofactor. It depends on Co(2+) as a cofactor. The cofactor is thiamine diphosphate.

It catalyses the reaction D-sedoheptulose 7-phosphate + D-glyceraldehyde 3-phosphate = aldehydo-D-ribose 5-phosphate + D-xylulose 5-phosphate. Functionally, catalyzes the transfer of a two-carbon ketol group from a ketose donor to an aldose acceptor, via a covalent intermediate with the cofactor thiamine pyrophosphate. This Candida albicans (Yeast) protein is Transketolase 1 (TKT1).